The chain runs to 275 residues: NADPH-dependent 7-cyano-7-deazaguanine reductase (275 aa).

A substrate-binding site is contributed by 81 to 83 (IES). 83 to 84 (SK) is an NADPH binding site. Residue cysteine 181 is the Thioimide intermediate of the active site. Aspartate 188 acts as the Proton donor in catalysis. Residue 220–221 (HE) participates in substrate binding. 249-250 (RG) contributes to the NADPH binding site.

It belongs to the GTP cyclohydrolase I family. QueF type 2 subfamily. Homodimer.

The protein resides in the cytoplasm. It catalyses the reaction 7-aminomethyl-7-carbaguanine + 2 NADP(+) = 7-cyano-7-deazaguanine + 2 NADPH + 3 H(+). It functions in the pathway tRNA modification; tRNA-queuosine biosynthesis. Catalyzes the NADPH-dependent reduction of 7-cyano-7-deazaguanine (preQ0) to 7-aminomethyl-7-deazaguanine (preQ1). This Xylella fastidiosa (strain 9a5c) protein is NADPH-dependent 7-cyano-7-deazaguanine reductase.